The chain runs to 534 residues: Glucans biosynthesis protein D (534 aa).

The tat-type signal signal peptide spans 1-26; that stretch reads MQRRDFIRNASLALAAFGLPSLPACA.

Belongs to the OpgD/OpgG family. In terms of processing, predicted to be exported by the Tat system. The position of the signal peptide cleavage has not been experimentally proven.

The protein resides in the periplasm. The protein operates within glycan metabolism; osmoregulated periplasmic glucan (OPG) biosynthesis. Its function is as follows. Probably involved in the control of the structural glucose backbone of osmoregulated periplasmic glucans (OPGs). The protein is Glucans biosynthesis protein D of Stenotrophomonas maltophilia (strain K279a).